The sequence spans 251 residues: Phosphate import ATP-binding protein PstB (251 aa).

Residues 5–246 form the ABC transporter domain; it reads MNSKDVNFWY…PENKKTEDYI (242 aa). 37 to 44 is an ATP binding site; the sequence is GPSGCGKS.

Belongs to the ABC transporter superfamily. Phosphate importer (TC 3.A.1.7) family. As to quaternary structure, the complex is composed of two ATP-binding proteins (PstB), two transmembrane proteins (PstC and PstA) and a solute-binding protein (PstS).

It is found in the cell membrane. It catalyses the reaction phosphate(out) + ATP + H2O = ADP + 2 phosphate(in) + H(+). Part of the ABC transporter complex PstSACB involved in phosphate import. Responsible for energy coupling to the transport system. The chain is Phosphate import ATP-binding protein PstB from Methanococcus maripaludis (strain DSM 14266 / JCM 13030 / NBRC 101832 / S2 / LL).